The following is a 254-amino-acid chain: 3-oxo-5-alpha-steroid 4-dehydrogenase 2 (254 aa).

The next 4 helical transmembrane spans lie at Ser-8–Ala-28, Pro-72–Phe-92, Phe-146–Ile-166, and Leu-206–Leu-226.

It belongs to the steroid 5-alpha reductase family.

Its subcellular location is the microsome membrane. It is found in the endoplasmic reticulum membrane. The enzyme catalyses a 3-oxo-5alpha-steroid + NADP(+) = a 3-oxo-Delta(4)-steroid + NADPH + H(+). It catalyses the reaction 17beta-hydroxy-5alpha-androstan-3-one + NADP(+) = testosterone + NADPH + H(+). The catalysed reaction is 5alpha-pregnane-3,20-dione + NADP(+) = progesterone + NADPH + H(+). Functionally, converts testosterone (T) into 5-alpha-dihydrotestosterone (DHT) and progesterone or corticosterone into their corresponding 5-alpha-3-oxosteroids. It plays a central role in sexual differentiation and androgen physiology. The protein is 3-oxo-5-alpha-steroid 4-dehydrogenase 2 (SRD5A2) of Sus scrofa (Pig).